The chain runs to 255 residues: Large ribosomal subunit protein uL4 (255 aa).

It belongs to the universal ribosomal protein uL4 family. In terms of assembly, part of the 50S ribosomal subunit.

One of the primary rRNA binding proteins, this protein initially binds near the 5'-end of the 23S rRNA. It is important during the early stages of 50S assembly. It makes multiple contacts with different domains of the 23S rRNA in the assembled 50S subunit and ribosome. Its function is as follows. Forms part of the polypeptide exit tunnel. The protein is Large ribosomal subunit protein uL4 of Pyrococcus abyssi (strain GE5 / Orsay).